We begin with the raw amino-acid sequence, 315 residues long: MSESLRIIFAGTPDFAARHLDALLSSGHNIVGVFTQPDRPAGRGKKLMPSPVKVLAEDKGLPVFQPVSLRPQENQQRVADLQADVMVVVAYGLILPKAVLEMPRLGCINVHGSLLPRWRGAAPIQRSLWAGDAETGVTIMQMDVGLDTGDMLYKLSCPITAEDTSGTLYDKLAELGPQGLITTLKQLADGTAKPEVQDETLVTYAEKLSKEEARIDWSLSAAQLERCIRAFNPWPMSWLEIEGQPVKVWKASVIDTTTKAAPGTILEANKQGIQVATGDGILNLLSMQPAGKKAMSVQDLLNSRREWFVPGNRLA.

Positions 2-189 (SESLRIIFAG…LITTLKQLAD (188 aa)) are N-terminal domain. (6S)-5,6,7,8-tetrahydrofolate is bound at residue 113–116 (SLLP). Positions 210-315 (KEEARIDWSL…EWFVPGNRLA (106 aa)) are C-terminal domain.

It belongs to the Fmt family.

The enzyme catalyses L-methionyl-tRNA(fMet) + (6R)-10-formyltetrahydrofolate = N-formyl-L-methionyl-tRNA(fMet) + (6S)-5,6,7,8-tetrahydrofolate + H(+). Functionally, attaches a formyl group to the free amino group of methionyl-tRNA(fMet). The formyl group appears to play a dual role in the initiator identity of N-formylmethionyl-tRNA by promoting its recognition by IF2 and preventing the misappropriation of this tRNA by the elongation apparatus. The polypeptide is Methionyl-tRNA formyltransferase (Escherichia coli O6:H1 (strain CFT073 / ATCC 700928 / UPEC)).